We begin with the raw amino-acid sequence, 302 residues long: uncharacterized protein (302 aa).

The first 28 residues, 1-28, serve as a signal peptide directing secretion; the sequence is MNKLTAQNLLKKSRFLKYSLLTSISVGA.

This is an uncharacterized protein from Rickettsia prowazekii (strain Madrid E).